The chain runs to 119 residues: Large ribosomal subunit protein bL20 (119 aa).

Belongs to the bacterial ribosomal protein bL20 family.

Its function is as follows. Binds directly to 23S ribosomal RNA and is necessary for the in vitro assembly process of the 50S ribosomal subunit. It is not involved in the protein synthesizing functions of that subunit. The sequence is that of Large ribosomal subunit protein bL20 from Bacillus licheniformis (strain ATCC 14580 / DSM 13 / JCM 2505 / CCUG 7422 / NBRC 12200 / NCIMB 9375 / NCTC 10341 / NRRL NRS-1264 / Gibson 46).